We begin with the raw amino-acid sequence, 392 residues long: Alanine--glyoxylate aminotransferase (392 aa).

Lys-209 is subject to N6-(pyridoxal phosphate)lysine. Lys-225 carries the post-translational modification N6-acetyllysine; alternate. Position 225 is an N6-succinyllysine; alternate (Lys-225). 2 positions are modified to N6-acetyllysine: Lys-234 and Lys-312. Arg-360 contributes to the substrate binding site. Residues 390–392 (SQL) carry the Microbody targeting signal motif.

The protein belongs to the class-V pyridoxal-phosphate-dependent aminotransferase family. In terms of assembly, homodimer. The cofactor is pyridoxal 5'-phosphate.

It localises to the peroxisome. It catalyses the reaction L-serine + pyruvate = 3-hydroxypyruvate + L-alanine. It carries out the reaction glyoxylate + L-alanine = glycine + pyruvate. Its function is as follows. Peroxisomal aminotransferase that catalyzes the transamination of glyoxylate to glycine and contributes to the glyoxylate detoxification. Also catalyzes the transamination between L-serine and pyruvate and contributes to gluconeogenesis from the L-serine metabolism. The sequence is that of Alanine--glyoxylate aminotransferase from Oryctolagus cuniculus (Rabbit).